Here is a 1517-residue protein sequence, read N- to C-terminus: MNQFPNQPGNFGQNYYKPVQGSIPANSEATNFQQNNSRENKSECELRQNSIAASMSAYPNGMYAGAENHNVENHENYTMVGHDHMEEVYGDDLVNEPRIAYSSDIVATFDGKDFGSNLHVDDTLDQQWAHFAGKQQHPLEPREIPFPVTDPLNSKIEMKQFTNIAAVLRYRGVHSAKKTAFIILDNKGKEFTSITWEKLASRAEKVAQVIRDKSGLFRSDRVVLMYRDCEAIDFVVSLFGCFIAGVVAVPINRFDDYNELSSILTTTSARLALTTDANLKAFQRDLNAKKLHWPKNVEWWKTNEFGGFHLKKKAEMPPLQVPDLAYIEFSRSPIGELHGVVISHRTILHQMNCLAAIHATAPAYESDKLDYLSIDREYTEGLSKSGLFLTYLDLRQAIGLILGVLHTVFSGYTTVWCPQNAVFVPGLWANLATRYRASFMLTDYAGLKTIAYNYQNDPKATLGFSKKHSVDLSSLRMCMVDCLNVDCEFQEIVSDRWLKPLGNQNPRATFVPLLCLPEHGGMVISMKDWIGGEEFMSPKGFKSPRTPENEISEVLLEKEALKLNEVVVLAEDDKARRQSKHPNTIRVGAFWYPFVDATLAIVDPETQVLCLPNIVGEIWVDSPSLSGGFFALPKQTEAIFHARTSFISSDTFQPIPSNQEFLRTGLLGFIRKGKVYVLGLYEDRLQQKVEWVDNGKQDTIFFHHYTSHLVNTIMRKVSKVFDCSAFDIFVNSEHLPVVLLESPAANIPTEANGNQVVINYGLLDLITTECVECLLEDHQVRVYCVLICAPFTLPRVTKNGRQEIGNMMCRRAFEHGTLPFLYVKFAVERAVLNLPVGEDAIDGIWSSYASGIRQNLLSDQELQYSGFIDRSLRYDAKTSVDISSCHTMLQLLQLRVAKNAEDIAYITIDGRGREGKNITWRKFDQRVATIIRYLQKKKYIKPGRVVVLMYTHSEDFVYALYACFYLGLIPIPVPPLDHMRLSEDVPAFLFLIKHYYVSAVLVNSEADTALRAKTTSQHLKQSAMAAKVVLPSFIVTSKISKQTKSIKELNVKLDPICLDPAFPALVWAFWSPDHRLTLTAYNHQTLLSICQIHKETCQMTHKRPLLGHVRSMSGIGFFHTCLMGVFLGTTTYLLSPVDFANNPLLLFQIISKYKIKDTYATFQTLNYIQNQQPTKWPNLSCLENLMIPHDGRISAFYIASLQKYFVKHGLSPYAFSTVYSNCLNPFISTRSYMGAIPTPQLLDLRALRHGLIQPCESADKPYALPLLDSGMVPVSTQLAIVNPDTRELCRVGEYGEIWMRSSANAISFFQSTDPVDMMRFNATNSDGFLGNGYVRTGDLGFLQITSHSMGPNAPVVDMQLLYVLGPIGETFEVNGLSHFPSDIEDTIERSHPRIARGGTAVFQSAGRVVVVIEALGQDFLAAIVPVVINSILDEHQIIADVVAFTSRGNFPRSRLREKQRGKILASWVTGRLRTTQVFYIRGSGEGEFQSSYVPDYNPSLRSTPSVSSRSTLPQRVF.

The span at 1–13 shows a compositional bias: polar residues; sequence MNQFPNQPGNFGQ. Positions 1–26 are disordered; that stretch reads MNQFPNQPGNFGQNYYKPVQGSIPAN. Residues N35, N40, and N76 are each glycosylated (N-linked (GlcNAc...) asparagine). The next 5 membrane-spanning stretches (helical) occupy residues 231–251, 397–417, 510–530, 612–632, and 720–740; these read AIDF…AVPI, AIGL…TVWC, FVPL…KDWI, PNIV…FFAL, and VFDC…VVLL. The N-linked (GlcNAc...) asparagine glycan is linked to N917. Transmembrane regions (helical) follow at residues 956 to 976, 985 to 1005, 1051 to 1071, and 1114 to 1134; these read FVYA…VPPL, VPAF…VNSE, VKLD…AFWS, and GIGF…TYLL. N1178 carries an N-linked (GlcNAc...) asparagine glycan. Residues 1261-1281 form a helical membrane-spanning segment; sequence PYALPLLDSGMVPVSTQLAIV. An N-linked (GlcNAc...) asparagine glycan is attached at N1321. The next 2 membrane-spanning stretches (helical) occupy residues 1353-1373 and 1408-1428; these read APVV…TFEV and VVVV…PVVI.

It to S.pombe SpAC22F3.04.

The protein resides in the membrane. This is an uncharacterized protein from Schizosaccharomyces pombe (strain 972 / ATCC 24843) (Fission yeast).